Consider the following 209-residue polypeptide: Max dimerization protein 4 (209 aa).

The segment at 6 to 23 is interaction with SIN3A and SIN3B; it reads LLLLLEAAEYLERRDREA. The 53-residue stretch at 53–105 folds into the bHLH domain; that stretch reads NNRSSHNELEKHRRAKLRLYLEQLKQLGPLGPDSTRHTTLSLLKRAKMHIKKL. Positions 137–209 are disordered; it reads SVERVRTDST…CRRPGCPGLS (73 aa). Acidic residues predominate over residues 153–163; it reads DDSEQEVDIEG. Over residues 185–195 the composition is skewed to polar residues; the sequence is SLQSSGCSDSS.

Efficient DNA binding requires dimerization with another bHLH protein. Binds DNA as a heterodimer with MAX. Interacts with SIN3A AND SIN3B. Interacts with RNF17.

It is found in the nucleus. In terms of biological role, transcriptional repressor. Binds with MAX to form a sequence-specific DNA-binding protein complex which recognizes the core sequence 5'-CAC[GA]TG-3'. Antagonizes MYC transcriptional activity by competing for MAX and suppresses MYC dependent cell transformation. This is Max dimerization protein 4 (Mxd4) from Mus musculus (Mouse).